The primary structure comprises 270 residues: Checkpoint signal transducer rad24 (270 aa).

Residues S34 and S66 each carry the phosphoserine modification. Residues 242 to 270 (AAAGGNTEGAQENAPSNAPEGEAEPKADA) are disordered.

This sequence belongs to the 14-3-3 family. In terms of assembly, homodimer. Binds preferentially to mei2 phosphorylated by ran1/pat1. Binds preferentially to cdc25 phosphorylated by srk1 during G2; the interaction is increased during osmotic stress. Interacts with byr2. Interacts with rad25.

The protein resides in the cytoplasm. In terms of biological role, acts in cell cycle and stress checkpoint signaling by sequestering signal transducers regulated by the checkpoints. Required for the DNA damage checkpoint that ensures that DNA damage is repaired before mitosis is attempted. During environmental stress, sequesters srk1-phosphorylated cdc25 in the cytoplasm to delay the G2/M transition. Sequesters byr2 in the cytoplasm to prevent its translocation to the plasma membrane. Sequesters ran1/pat1-phosphorylated mei2 from its non-coding RNA activators (including meiRNA), to prevent meiotic induction in vegetative cells and to regulate meiosis I. This Schizosaccharomyces pombe (strain 972 / ATCC 24843) (Fission yeast) protein is Checkpoint signal transducer rad24.